We begin with the raw amino-acid sequence, 418 residues long: Tubulin alpha chain (418 aa).

GTP-binding residues include Gln11, Glu71, Ser140, Gly144, Thr179, Asn206, and Asn228. Residue Glu71 participates in Mg(2+) binding. Residue Glu255 is part of the active site.

It belongs to the tubulin family. Dimer of alpha and beta chains. A typical microtubule is a hollow water-filled tube with an outer diameter of 25 nm and an inner diameter of 15 nM. Alpha-beta heterodimers associate head-to-tail to form protofilaments running lengthwise along the microtubule wall with the beta-tubulin subunit facing the microtubule plus end conferring a structural polarity. Microtubules usually have 13 protofilaments but different protofilament numbers can be found in some organisms and specialized cells. It depends on Mg(2+) as a cofactor.

The protein resides in the cytoplasm. The protein localises to the cytoskeleton. The catalysed reaction is GTP + H2O = GDP + phosphate + H(+). Functionally, tubulin is the major constituent of microtubules, a cylinder consisting of laterally associated linear protofilaments composed of alpha- and beta-tubulin heterodimers. Microtubules grow by the addition of GTP-tubulin dimers to the microtubule end, where a stabilizing cap forms. Below the cap, tubulin dimers are in GDP-bound state, owing to GTPase activity of alpha-tubulin. The sequence is that of Tubulin alpha chain (TUB1) from Ajellomyces capsulatus (Darling's disease fungus).